The primary structure comprises 336 residues: Ornithine carbamoyltransferase, catabolic (336 aa).

Carbamoyl phosphate is bound by residues 57-60, Q84, R108, and 135-138; these read STRT and HPTQ. L-ornithine contacts are provided by residues N168, D232, and 236–237; that span reads SM. Carbamoyl phosphate-binding positions include 274–275 and R321; that span reads CL.

Belongs to the aspartate/ornithine carbamoyltransferase superfamily. OTCase family. Nonameric or dodecamer (tetramer of trimers).

It localises to the cytoplasm. It catalyses the reaction carbamoyl phosphate + L-ornithine = L-citrulline + phosphate + H(+). It functions in the pathway amino-acid degradation; L-arginine degradation via ADI pathway; carbamoyl phosphate from L-arginine: step 2/2. With respect to regulation, inhibited by 2-aminopentanoic acid (norvaline). Activated by phosphate and nucleoside monophosphates such as AMP, GMP, CMP, UMP. Allosterically inhibited by the polyamines such as spermidine and putrescine. Functionally, involved in the catabolism of arginine. Catalyzes the phosphorolysis of citrulline, the reverse reaction of the biosynthetic one, yielding ornithine and carbamoyl phosphate which serve to generate ATP from ADP. This catabolic OTCase does not carry out the biosynthetic reaction because of a poor affinity and a marked cooperativity for carbamoyl phosphate. The protein is Ornithine carbamoyltransferase, catabolic of Pseudomonas aeruginosa (strain ATCC 15692 / DSM 22644 / CIP 104116 / JCM 14847 / LMG 12228 / 1C / PRS 101 / PAO1).